An 87-amino-acid chain; its full sequence is Insertion element IS407 uncharacterized 10.0 kDa protein (87 aa).

Belongs to the transposase 8 family.

This is Insertion element IS407 uncharacterized 10.0 kDa protein from Burkholderia multivorans (strain ATCC 17616 / 249).